Here is a 419-residue protein sequence, read N- to C-terminus: UDP-N-acetylglucosamine 1-carboxyvinyltransferase (419 aa).

A phosphoenolpyruvate-binding site is contributed by 22–23 (KN). Position 95 (arginine 95) interacts with UDP-N-acetyl-alpha-D-glucosamine. Cysteine 119 functions as the Proton donor in the catalytic mechanism. Cysteine 119 is modified (2-(S-cysteinyl)pyruvic acid O-phosphothioketal). UDP-N-acetyl-alpha-D-glucosamine is bound by residues 164–167 (KVSV), aspartate 308, and isoleucine 330.

Belongs to the EPSP synthase family. MurA subfamily.

Its subcellular location is the cytoplasm. The enzyme catalyses phosphoenolpyruvate + UDP-N-acetyl-alpha-D-glucosamine = UDP-N-acetyl-3-O-(1-carboxyvinyl)-alpha-D-glucosamine + phosphate. The protein operates within cell wall biogenesis; peptidoglycan biosynthesis. Cell wall formation. Adds enolpyruvyl to UDP-N-acetylglucosamine. The chain is UDP-N-acetylglucosamine 1-carboxyvinyltransferase from Rickettsia felis (strain ATCC VR-1525 / URRWXCal2) (Rickettsia azadi).